The primary structure comprises 271 residues: Pyridoxine kinase (271 aa).

Asn-141 contacts ATP. Glu-144 is a Mg(2+) binding site. Residues 178-182, Asp-190, Ile-206, Gly-215, and Lys-240 contribute to the ATP site; that span reads TGGGK.

Belongs to the ThiD family. As to quaternary structure, homodimer.

It catalyses the reaction pyridoxal + ATP = pyridoxal 5'-phosphate + ADP + H(+). In terms of biological role, phosphorylates B6 vitamers; functions in a salvage pathway. Uses pyridoxal, pyridoxine, and pyridoxamine as substrates. Can also use hydroxymethylpyrimidine (HMP) as substrate. The protein is Pyridoxine kinase (pdxK) of Bacillus subtilis (strain 168).